Here is a 326-residue protein sequence, read N- to C-terminus: Ribosomal RNA small subunit methyltransferase H (326 aa).

S-adenosyl-L-methionine contacts are provided by residues Gly-45–His-47, Asp-65, Asp-113, and Gln-120. Positions Pro-299–Arg-326 are disordered. The span at Arg-316 to Arg-326 shows a compositional bias: basic and acidic residues.

It belongs to the methyltransferase superfamily. RsmH family.

Its subcellular location is the cytoplasm. The enzyme catalyses cytidine(1402) in 16S rRNA + S-adenosyl-L-methionine = N(4)-methylcytidine(1402) in 16S rRNA + S-adenosyl-L-homocysteine + H(+). Specifically methylates the N4 position of cytidine in position 1402 (C1402) of 16S rRNA. The sequence is that of Ribosomal RNA small subunit methyltransferase H from Thermomicrobium roseum (strain ATCC 27502 / DSM 5159 / P-2).